The following is a 104-amino-acid chain: MTETSTAKVATTKKSTTTRKPFSLQGVITHSSSRTIIKAPERLADQPPVASKVVRKKSTTTVKPTTAIKKKVEKKKVVALKKTASASSSGKKVVASKKKVVAKK.

Disordered stretches follow at residues 1–20 (MTET…TTRK) and 83–104 (TASA…VAKK). Low complexity predominate over residues 83-93 (TASASSSGKKV). Over residues 94 to 104 (VASKKKVVAKK) the composition is skewed to basic residues.

This is an uncharacterized protein from Dictyostelium discoideum (Social amoeba).